The sequence spans 473 residues: Adenosylhomocysteinase (473 aa).

Substrate contacts are provided by T60, D135, and E197. 198 to 200 (TTT) contributes to the NAD(+) binding site. 2 residues coordinate substrate: K227 and D231. NAD(+)-binding positions include N232, 261–266 (GFGDVG), E284, N319, 340–342 (IGH), and N385.

It belongs to the adenosylhomocysteinase family. The cofactor is NAD(+).

The protein resides in the cytoplasm. It catalyses the reaction S-adenosyl-L-homocysteine + H2O = L-homocysteine + adenosine. The protein operates within amino-acid biosynthesis; L-homocysteine biosynthesis; L-homocysteine from S-adenosyl-L-homocysteine: step 1/1. May play a key role in the regulation of the intracellular concentration of adenosylhomocysteine. The polypeptide is Adenosylhomocysteinase (Bradyrhizobium diazoefficiens (strain JCM 10833 / BCRC 13528 / IAM 13628 / NBRC 14792 / USDA 110)).